The primary structure comprises 125 residues: Large ribosomal subunit protein bL12 (125 aa).

Belongs to the bacterial ribosomal protein bL12 family. As to quaternary structure, homodimer. Part of the ribosomal stalk of the 50S ribosomal subunit. Forms a multimeric L10(L12)X complex, where L10 forms an elongated spine to which 2 to 4 L12 dimers bind in a sequential fashion. Binds GTP-bound translation factors.

Its function is as follows. Forms part of the ribosomal stalk which helps the ribosome interact with GTP-bound translation factors. Is thus essential for accurate translation. The protein is Large ribosomal subunit protein bL12 of Syntrophomonas wolfei subsp. wolfei (strain DSM 2245B / Goettingen).